Here is a 161-residue protein sequence, read N- to C-terminus: N5-carboxyaminoimidazole ribonucleotide mutase (161 aa).

Substrate is bound by residues Ser-9, Asp-12, and Arg-39.

The protein belongs to the AIR carboxylase family. Class I subfamily.

It carries out the reaction 5-carboxyamino-1-(5-phospho-D-ribosyl)imidazole + H(+) = 5-amino-1-(5-phospho-D-ribosyl)imidazole-4-carboxylate. The protein operates within purine metabolism; IMP biosynthesis via de novo pathway; 5-amino-1-(5-phospho-D-ribosyl)imidazole-4-carboxylate from 5-amino-1-(5-phospho-D-ribosyl)imidazole (N5-CAIR route): step 2/2. Catalyzes the conversion of N5-carboxyaminoimidazole ribonucleotide (N5-CAIR) to 4-carboxy-5-aminoimidazole ribonucleotide (CAIR). The protein is N5-carboxyaminoimidazole ribonucleotide mutase of Aliivibrio fischeri (strain ATCC 700601 / ES114) (Vibrio fischeri).